Consider the following 86-residue polypeptide: U-myrmeciitoxin(01)-Mg1a (86 aa).

An N-terminal signal peptide occupies residues 1–26 (MKLLYLLLTLAIIFVLTIVHAPNVEA). The propeptide occupies 27–52 (KALADPESDAVGFADAFGDADAEATG). Position 85 is a leucine amide (L85).

The protein belongs to the formicidae venom precursor-01 superfamily. In terms of tissue distribution, expressed by the venom gland. This toxin is detected along the entire venom gland, as well as in the venom reservoir, the venom duct and in the venom. No toxin are detected in the Dufour's gland.

It localises to the secreted. The protein localises to the target cell membrane. In terms of biological role, toxin that may interact with target cell membranes, producing a concentration-dependent leak in ion conductance, possibly via multimeric pore formation. It produces an immediate sharp increase of calcium concentration in all DRG neurons. This influx in calcium stabilizes without resulting in any observable dye leakage, showing that the effect is not simply cytolytic. This toxin may be one of the major contributors to the pain associated with envenomation. The toxin also displays a weak cytotoxicity (on HEK cells) and some antimicrobial activity (MIC=2.5 uM on C.neoformans (var. grubii), MIC=10.2 uM on S.aureus), but is not hemolytic to human erythtrocytes. In vivo, intraplantar injection into mice causes spontaneous nocifensive behavior (licking, flinching, or shaking of the paw), which lasts 5-7 minutes (10 and 100 uM tested). Mechanical and heat hypoalgesia are observed at 20 and 25 minutes after injection (highest dose tested of 100 uM). In vivo, injection into crickets (A.domesticus) causes an immediate, dose-dependent, reversible and nonlethal incapacitation that lasts about 53 minutes at the highest dose tested (60 ug/g). In Myrmecia gulosa (Red bulldog ant), this protein is U-myrmeciitoxin(01)-Mg1a.